A 185-amino-acid polypeptide reads, in one-letter code: UPF0669 protein C6orf120 homolog (185 aa).

The signal sequence occupies residues 1–23; the sequence is MATPWRCALLMILASQVVILVKC. N-linked (GlcNAc...) asparagine glycosylation occurs at asparagine 47.

The protein belongs to the UPF0669 family.

Its subcellular location is the secreted. Functionally, may be involved in induction of apoptosis in CD4(+) T-cells, but not CD8(+) T-cells or hepatocytes. In Rattus norvegicus (Rat), this protein is UPF0669 protein C6orf120 homolog.